Reading from the N-terminus, the 947-residue chain is Cell adhesion molecule CEACAM5 (947 aa).

Residues 1–34 (MEASSVLPCKWCTHLQGLLLTASFLTCCHLPTTA) form the signal peptide. Ig-like V-type domains are found at residues 35-132 (QITI…EIVS), 166-259 (SEGG…VQLY), 270-378 (PLQV…LHVN), 392-498 (RLSI…LQLD), 509-615 (QVKI…LHVN), 642-733 (GESV…VQLQ), and 746-851 (DQLI…VQVH). 13 N-linked (GlcNAc...) asparagine glycosylation sites follow: Asn-57, Asn-103, Asn-110, Asn-207, Asn-224, Asn-341, Asn-461, Asn-472, Asn-578, Asn-698, Asn-709, Asn-816, and Asn-823. In terms of domain architecture, Ig-like C2-type 1 spans 859–943 (PFVRVTDTTV…SKSSLPVRLA (85 aa)). A disulfide bridge links Cys-878 with Cys-926.

It belongs to the immunoglobulin superfamily. CEA family. As to quaternary structure, homodimer.

The protein localises to the cell membrane. Its subcellular location is the apical cell membrane. It is found in the cell surface. Its function is as follows. Cell surface glycoprotein that plays a role in cell adhesion, intracellular signaling and tumor progression. Mediates homophilic and heterophilic cell adhesion with other carcinoembryonic antigen-related cell adhesion molecules, such as CEACAM6. Plays a role as an oncogene by promoting tumor progression; induces resistance to anoikis of colorectal carcinoma cells. In Mus musculus (Mouse), this protein is Cell adhesion molecule CEACAM5.